A 436-amino-acid chain; its full sequence is Eukaryotic peptide chain release factor subunit 1 (436 aa).

Belongs to the eukaryotic release factor 1 family. In terms of assembly, heterodimer of two subunits, one of which binds GTP.

The protein localises to the cytoplasm. In terms of biological role, directs the termination of nascent peptide synthesis (translation) in response to the termination codons UAA and UAG. In B.musculus UGA codes for tryptophan. This Blepharisma musculus protein is Eukaryotic peptide chain release factor subunit 1 (eRF1).